The sequence spans 83 residues: Arminin 4364 (83 aa).

An N-terminal signal peptide occupies residues 1–18 (MKTVFAILFLAFIALTYA). Positions 19–55 (RSYEDVKEEIKNEVEKEILEDLEKETDELNERKINDA) are excised as a propeptide. Valine 80 is modified (valine amide).

This sequence belongs to the arminin family. As to expression, expressed in entodermal epithelium along the body column.

The protein localises to the secreted. Its subcellular location is the target cell membrane. Antimicrobial peptide with a broad-spectrum antimicrobial activity. Keeps its antibacterial activity under a wide range of salt concentrations that mimic physiological conditions of human blood, which is surprising, since Hydra is an obligate freshwater animal with nearly no salt tolerance. Does not affect red blood cells. This is Arminin 4364 from Hydra vulgaris (Hydra).